The primary structure comprises 326 residues: tRNA-modifying protein YgfZ (326 aa).

Residues tryptophan 27 and tryptophan 189 each contribute to the folate site.

This sequence belongs to the tRNA-modifying YgfZ family.

It localises to the cytoplasm. Folate-binding protein involved in regulating the level of ATP-DnaA and in the modification of some tRNAs. It is probably a key factor in regulatory networks that act via tRNA modification, such as initiation of chromosomal replication. This is tRNA-modifying protein YgfZ from Shigella boydii serotype 18 (strain CDC 3083-94 / BS512).